Here is a 489-residue protein sequence, read N- to C-terminus: Metal cation symporter ZIP14 (489 aa).

A signal peptide spans 1 to 28 (MKRLHPALPSCLLLVLFGIWRTAPQTHA). The Extracellular segment spans residues 29–155 (SSAGLPPLSA…PSAIEVWGYG (127 aa)). Asparagine 52, asparagine 75, asparagine 85, and asparagine 100 each carry an N-linked (GlcNAc...) asparagine glycan. The chain crosses the membrane as a helical span at residues 156–176 (FLCVTVISLCSLMGASVVPFM). The Cytoplasmic portion of the chain corresponds to 177 to 184 (KKTFYKRL). Residues 185-205 (LLYFIALAIGTLYSNALFQLI) traverse the membrane as a helical segment. The Extracellular segment spans residues 206 to 221 (PEAFGFNPQDNYVSKS). A helical membrane pass occupies residues 222–242 (AVVFGGFYLFFFTEKILKMLL). Topologically, residues 243-349 (KQKNEHHHGH…SDGLHNFIDG (107 aa)) are cytoplasmic. Residues 248–255 (HHHGHNHF) carry the HHHGHXHX-motif motif. A helical membrane pass occupies residues 350–370 (LAIGASFTVSVFQGISTSVAI). Residues 371-394 (LCEEFPHELGDFVILLNAGMSIQQ) are Extracellular-facing. Residues 373–378 (EEFPHE) carry the XEXPHE-motif motif. Residues 395–415 (ALFFNFLSACCCYLGLAFGIL) traverse the membrane as a helical segment. Topologically, residues 416-421 (AGSHFS) are cytoplasmic. The chain crosses the membrane as a helical span at residues 422 to 442 (ANWIFALAGGMFLYIALADMF). Residues 443 to 457 (PEMNEVCQEDEKNDS) are Extracellular-facing. Residues 458-478 (FLVPFVIQNLGLLTGFSIMLV) traverse the membrane as a helical segment. Over 479–489 (LTMYSGQIQIG) the chain is Cytoplasmic.

Belongs to the ZIP transporter (TC 2.A.5) family. As to quaternary structure, homotrimer. Ubiquitinated. Ubiquitination occurs upon iron depletion. The ubiquitinated form undergoes proteasomal degradation. In terms of processing, N-glycosylated. N-glycosylation at Asn-100 is required for iron-regulated extraction of the transporter from membranes and subsequent proteasomal degradation. In terms of tissue distribution, widely expressed. Highly and transiently expressed during the early stage of adipocyte differentiation. Strongly expressed in liver, preadipocyte, duodenum and jejunum, moderately in brain, heart, skeletal muscle, spleen, pancreas, kidney and white adipose cells. Expression is almost undetectable in lung, testis and brown adipose cells. Expressed by chondrocytes and pituitary cells. More strongly expressed in brain. As to expression, more strongly expressed in liver, kidney and duodenum.

The protein resides in the cell membrane. The protein localises to the apical cell membrane. Its subcellular location is the basolateral cell membrane. It is found in the early endosome membrane. It localises to the late endosome membrane. The protein resides in the lysosome membrane. It carries out the reaction Zn(2+)(out) + 2 hydrogencarbonate(out) = Zn(2+)(in) + 2 hydrogencarbonate(in). The catalysed reaction is Mn(2+)(out) + 2 hydrogencarbonate(out) = Mn(2+)(in) + 2 hydrogencarbonate(in). The enzyme catalyses Fe(2+)(out) + 2 hydrogencarbonate(out) = Fe(2+)(in) + 2 hydrogencarbonate(in). It catalyses the reaction Cd(2+)(out) + 2 hydrogencarbonate(out) = Cd(2+)(in) + 2 hydrogencarbonate(in). With respect to regulation, inhibited by cyanide and therefore dependent of an energy source. Inhibited by DIDS/4,4'-diisothiocyanatostilbene-2,2'-disulfonic acid, an inhibitor hydrogencarbonate-dependent transporters. In terms of biological role, electroneutral transporter of the plasma membrane mediating the cellular uptake of the divalent metal cations zinc, manganese and iron that are important for tissue homeostasis, metabolism, development and immunity. Functions as an energy-dependent symporter, transporting through the membranes an electroneutral complex composed of a divalent metal cation and two bicarbonate anions. Beside these endogenous cellular substrates, can also import cadmium a non-essential metal which is cytotoxic and carcinogenic. Controls the cellular uptake by the intestinal epithelium of systemic zinc, which is in turn required to maintain tight junctions and the intestinal permeability. Modifies the activity of zinc-dependent phosphodiesterases, thereby indirectly regulating G protein-coupled receptor signaling pathways important for gluconeogenesis and chondrocyte differentiation. Regulates insulin receptor signaling, glucose uptake, glycogen synthesis and gluconeogenesis in hepatocytes through the zinc-dependent intracellular catabolism of insulin. Through zinc cellular uptake also plays a role in the adaptation of cells to endoplasmic reticulum stress. Major manganese transporter of the basolateral membrane of intestinal epithelial cells, it plays a central role in manganese systemic homeostasis through intestinal manganese uptake. Also involved in manganese extracellular uptake by cells of the blood-brain barrier. May also play a role in manganese and zinc homeostasis participating in their elimination from the blood through the hepatobiliary excretion. Also functions in the extracellular uptake of free iron. May also function intracellularly and mediate the transport from endosomes to cytosol of iron endocytosed by transferrin. Plays a role in innate immunity by regulating the expression of cytokines by activated macrophages. This Mus musculus (Mouse) protein is Metal cation symporter ZIP14.